The sequence spans 61 residues: Large ribosomal subunit protein uL30 (61 aa).

Belongs to the universal ribosomal protein uL30 family. In terms of assembly, part of the 50S ribosomal subunit.

The polypeptide is Large ribosomal subunit protein uL30 (Colwellia psychrerythraea (strain 34H / ATCC BAA-681) (Vibrio psychroerythus)).